We begin with the raw amino-acid sequence, 294 residues long: NADH-cytochrome b5 reductase 2 (294 aa).

Residues 11–27 (VLLPVVAAATSIGLVYH) traverse the membrane as a helical segment. Residues 45–149 (DEWIDLKLKK…KGPIVKWKWE (105 aa)) form the FAD-binding FR-type domain. 152–187 (QFQSIALIGGGTGITPLYQLLHEITKNPEDKTKVKL) contributes to the FAD binding site.

This sequence belongs to the flavoprotein pyridine nucleotide cytochrome reductase family. FAD serves as cofactor.

It localises to the mitochondrion outer membrane. The catalysed reaction is 2 Fe(III)-[cytochrome b5] + NADH = 2 Fe(II)-[cytochrome b5] + NAD(+) + H(+). Its function is as follows. May mediate the reduction of outer membrane cytochrome b5. The polypeptide is NADH-cytochrome b5 reductase 2 (MCR1) (Meyerozyma guilliermondii (strain ATCC 6260 / CBS 566 / DSM 6381 / JCM 1539 / NBRC 10279 / NRRL Y-324) (Yeast)).